The primary structure comprises 188 residues: Large ribosomal subunit protein eL18 (188 aa).

Lys-119 is covalently cross-linked (Glycyl lysine isopeptide (Lys-Gly) (interchain with G-Cter in SUMO2)). Ser-130 carries the phosphoserine modification. Residues 150–188 (RHFGKAPGTPHSHTKPYVRSKGRKFERARGRRASRGYKN) form a disordered region. Thr-158 carries the phosphothreonine modification. Basic residues-rich tracts occupy residues 161-171 (SHTKPYVRSKG) and 178-188 (RGRRASRGYKN). Lys-164 participates in a covalent cross-link: Glycyl lysine isopeptide (Lys-Gly) (interchain with G-Cter in SUMO2).

This sequence belongs to the eukaryotic ribosomal protein eL18 family. Component of the large ribosomal subunit.

It localises to the cytoplasm. It is found in the cytosol. Its subcellular location is the rough endoplasmic reticulum. Functionally, component of the large ribosomal subunit. The ribosome is a large ribonucleoprotein complex responsible for the synthesis of proteins in the cell. This is Large ribosomal subunit protein eL18 (Rpl18) from Rattus norvegicus (Rat).